The sequence spans 540 residues: Glucose-6-phosphate isomerase (540 aa).

The active-site Proton donor is the glutamate 350. Residues histidine 381 and lysine 503 contribute to the active site.

Belongs to the GPI family.

It is found in the cytoplasm. It carries out the reaction alpha-D-glucose 6-phosphate = beta-D-fructose 6-phosphate. Its pathway is carbohydrate biosynthesis; gluconeogenesis. It functions in the pathway carbohydrate degradation; glycolysis; D-glyceraldehyde 3-phosphate and glycerone phosphate from D-glucose: step 2/4. Functionally, catalyzes the reversible isomerization of glucose-6-phosphate to fructose-6-phosphate. This is Glucose-6-phosphate isomerase from Paraburkholderia phymatum (strain DSM 17167 / CIP 108236 / LMG 21445 / STM815) (Burkholderia phymatum).